Reading from the N-terminus, the 177-residue chain is Dynein light chain Tctex-type 5-A (177 aa).

It belongs to the dynein light chain Tctex-type family.

This chain is Dynein light chain Tctex-type 5-A (Dynlt5-a), found in Xenopus laevis (African clawed frog).